A 405-amino-acid chain; its full sequence is Arginine biosynthesis bifunctional protein ArgJ (405 aa).

Positions 152, 178, 189, 276, 400, and 405 each coordinate substrate. Thr189 functions as the Nucleophile in the catalytic mechanism.

This sequence belongs to the ArgJ family. In terms of assembly, heterotetramer of two alpha and two beta chains.

Its subcellular location is the cytoplasm. The enzyme catalyses N(2)-acetyl-L-ornithine + L-glutamate = N-acetyl-L-glutamate + L-ornithine. It catalyses the reaction L-glutamate + acetyl-CoA = N-acetyl-L-glutamate + CoA + H(+). It participates in amino-acid biosynthesis; L-arginine biosynthesis; L-ornithine and N-acetyl-L-glutamate from L-glutamate and N(2)-acetyl-L-ornithine (cyclic): step 1/1. Its pathway is amino-acid biosynthesis; L-arginine biosynthesis; N(2)-acetyl-L-ornithine from L-glutamate: step 1/4. In terms of biological role, catalyzes two activities which are involved in the cyclic version of arginine biosynthesis: the synthesis of N-acetylglutamate from glutamate and acetyl-CoA as the acetyl donor, and of ornithine by transacetylation between N(2)-acetylornithine and glutamate. This Pseudomonas syringae pv. syringae (strain B728a) protein is Arginine biosynthesis bifunctional protein ArgJ.